The sequence spans 671 residues: cGMP-dependent protein kinase 1 (671 aa).

Ser2 carries the N-acetylserine modification. A coiled-coil region spans residues 2 to 59 (SELEEDFAKILMLKEERIKELEKRLSEKEEEIQELKRKLHKCQSVLPVPSTHIGPRTT). The segment at 2 to 102 (SELEEDFAKI…LIKEAILDND (101 aa)) is required for dimerization. The segment at 9–44 (AKILMLKEERIKELEKRLSEKEEEIQELKRKLHKCQ) is leucine-zipper. The tract at residues 50-75 (PSTHIGPRTTRAQGISAEPQTYRSFH) is autoinhibitory domain. At Thr59 the chain carries Phosphothreonine; by autocatalysis. The segment at 103–220 (FMKNLELSQI…EYMEFLKSVP (118 aa)) is cGMP-binding, high affinity. 3',5'-cyclic AMP is bound by residues 167 to 170 (GELA) and 177 to 178 (RT). 3',5'-cyclic GMP-binding positions include 167–170 (GELA), 177–178 (RT), Arg282, 291–294 (GEKA), 301–302 (RT), and Tyr336. Residues 221–341 (TFQSLPEEIL…SNKAYEDAEA (121 aa)) are cGMP-binding, low affinity. 3',5'-cyclic AMP-binding positions include 291 to 294 (GEKA), 301 to 302 (RT), and Tyr336. One can recognise a Protein kinase domain in the interval 360-619 (FNIIDTLGVG…VKDIQKHKWF (260 aa)). ATP is bound by residues 366-374 (LGVGGFGRV) and Lys390. The active-site Proton acceptor is the Asp484. The residue at position 515 (Thr515) is a Phosphothreonine. The AGC-kinase C-terminal domain maps to 620–671 (EGFNWEGLRKGTLTPPIIPSVASPTDTSNFDSFPEDNDEPPPDDNSGWDIDF). The tract at residues 635–671 (PIIPSVASPTDTSNFDSFPEDNDEPPPDDNSGWDIDF) is disordered. Residues 652 to 661 (FPEDNDEPPP) show a composition bias toward acidic residues.

This sequence belongs to the protein kinase superfamily. AGC Ser/Thr protein kinase family. cGMP subfamily. As to quaternary structure, isoform alpha: parallel homodimer or heterodimer and also heterotetramer. Interacts directly with PPP1R12A. Non-covalent dimer of dimer of PRKG1-PRKG1 and PPP1R12A-PPP1R12A. This interaction targets PRKG1 to stress fibers to mediate smooth muscle cell relaxation and vasodilation in responses to rises in cGMP. Isoform beta: antiparallel homodimer. Part of cGMP kinase signaling complex at least composed of ACTA2/alpha-actin, CNN1/calponin H1, PLN/phospholamban, PRKG1 and ITPR1. Interacts with IRAG1. Forms a stable complex with ITPR1, IRAG1, and isoform beta of PRKG1. Interacts with TRPC7 (via ankyrin repeat domain). Isoform alpha interacts with RGS2. Interacts with GTF2I. In terms of processing, autophosphorylation increases kinase activity. 65 kDa monomer is produced by proteolytic cleavage. In terms of tissue distribution, primarily expressed in lung and placenta.

The protein localises to the cytoplasm. The enzyme catalyses L-seryl-[protein] + ATP = O-phospho-L-seryl-[protein] + ADP + H(+). The catalysed reaction is L-threonyl-[protein] + ATP = O-phospho-L-threonyl-[protein] + ADP + H(+). Its activity is regulated as follows. In the absence of cGMP, PRKG1 activity is suppressed by autoinhibitory contacts. Functionally, serine/threonine protein kinase that acts as a key mediator of the nitric oxide (NO)/cGMP signaling pathway. GMP binding activates PRKG1, which phosphorylates serines and threonines on many cellular proteins. Numerous protein targets for PRKG1 phosphorylation are implicated in modulating cellular calcium, but the contribution of each of these targets may vary substantially among cell types. Proteins that are phosphorylated by PRKG1 regulate platelet activation and adhesion, smooth muscle contraction, cardiac function, gene expression, feedback of the NO-signaling pathway, and other processes involved in several aspects of the CNS like axon guidance, hippocampal and cerebellar learning, circadian rhythm and nociception. Smooth muscle relaxation is mediated through lowering of intracellular free calcium, by desensitization of contractile proteins to calcium, and by decrease in the contractile state of smooth muscle or in platelet activation. Regulates intracellular calcium levels via several pathways: phosphorylates IRAG1 and inhibits IP3-induced Ca(2+) release from intracellular stores, phosphorylation of KCNMA1 (BKCa) channels decreases intracellular Ca(2+) levels, which leads to increased opening of this channel. PRKG1 phosphorylates the canonical transient receptor potential channel (TRPC) family which inactivates the associated inward calcium current. Another mode of action of NO/cGMP/PKGI signaling involves PKGI-mediated inactivation of the Ras homolog gene family member A (RhoA). Phosphorylation of RHOA by PRKG1 blocks the action of this protein in myriad processes: regulation of RHOA translocation; decreasing contraction; controlling vesicle trafficking, reduction of myosin light chain phosphorylation resulting in vasorelaxation. Activation of PRKG1 by NO signaling also alters gene expression in a number of tissues. In smooth muscle cells, increased cGMP and PRKG1 activity influence expression of smooth muscle-specific contractile proteins, levels of proteins in the NO/cGMP signaling pathway, down-regulation of the matrix proteins osteopontin and thrombospondin-1 to limit smooth muscle cell migration and phenotype. Regulates vasodilator-stimulated phosphoprotein (VASP) functions in platelets and smooth muscle. The chain is cGMP-dependent protein kinase 1 (PRKG1) from Homo sapiens (Human).